A 78-amino-acid polypeptide reads, in one-letter code: FXYD domain-containing ion transport regulator 7 (78 aa).

The Extracellular portion of the chain corresponds to 1-22; that stretch reads MATQVPTKVPQDPDPFYYDYDT. O-linked (GlcNAc) threonine glycosylation is found at Thr3 and Thr7. The chain crosses the membrane as a helical span at residues 23–43; that stretch reads VQTVGMTLATILFLLGILIIL. The Cytoplasmic portion of the chain corresponds to 44–78; the sequence is SKKVKCRKADSRSESPTCKSCKSELPSSAPGGGGV. Residues 52 to 78 are disordered; that stretch reads ADSRSESPTCKSCKSELPSSAPGGGGV. Residue Ser71 is modified to Phosphoserine.

This sequence belongs to the FXYD family. As to quaternary structure, regulatory subunit of the sodium/potassium-transporting ATPase which is composed of a catalytic alpha subunit, a non-catalytic beta subunit and an additional regulatory subunit. The regulatory subunit, a member of the FXYD protein family, modulates the enzymatic activity in a tissue- and isoform-specific way by changing affinities of the Na+/K+-ATPase toward Na(+), K(+) or ATP. O-glycosylated; required for stabilization and translocation to the plasma membrane.

It localises to the cell membrane. Functionally, associates with and regulates the activity of the sodium/potassium-transporting ATPase (NKA) which catalyzes the hydrolysis of ATP coupled with the exchange of Na(+) and K(+) ions across the plasma membrane. Reduces the apparent affinity for external K(+), an effect that depends on the presence of external Na(+) and voltage. Increases the apparent affinity for intracellular Na(+). The sequence is that of FXYD domain-containing ion transport regulator 7 (FXYD7) from Bos taurus (Bovine).